Reading from the N-terminus, the 235-residue chain is MAQRSKAYKAAKAAIGEDLYSPVEAIRLAKETNPSKTDATVEVALRLSVDPRKADQMVRGSVSLPHGTGKTARVVVFATGDRAEAARAAGADVVGDDDLIARISEGWVDFDAAVASPELMGKVGRLGKVLGPRNLMPNPKTGTVTPDVAKAVTDIKGGKIDFRVDKHSNLHFIIGKTSFEAKALVENYAAALEEILRLKPSSSKGRYISKATVATTFGPGVPMDPNVTSVDSSEL.

This sequence belongs to the universal ribosomal protein uL1 family. As to quaternary structure, part of the 50S ribosomal subunit.

Binds directly to 23S rRNA. The L1 stalk is quite mobile in the ribosome, and is involved in E site tRNA release. Its function is as follows. Protein L1 is also a translational repressor protein, it controls the translation of the L11 operon by binding to its mRNA. The sequence is that of Large ribosomal subunit protein uL1 from Micrococcus luteus (strain ATCC 4698 / DSM 20030 / JCM 1464 / CCM 169 / CCUG 5858 / IAM 1056 / NBRC 3333 / NCIMB 9278 / NCTC 2665 / VKM Ac-2230) (Micrococcus lysodeikticus).